Here is a 285-residue protein sequence, read N- to C-terminus: ATP phosphoribosyltransferase (285 aa).

The protein belongs to the ATP phosphoribosyltransferase family. Long subfamily. It depends on Mg(2+) as a cofactor.

It localises to the cytoplasm. It carries out the reaction 1-(5-phospho-beta-D-ribosyl)-ATP + diphosphate = 5-phospho-alpha-D-ribose 1-diphosphate + ATP. It functions in the pathway amino-acid biosynthesis; L-histidine biosynthesis; L-histidine from 5-phospho-alpha-D-ribose 1-diphosphate: step 1/9. With respect to regulation, feedback inhibited by histidine. Its function is as follows. Catalyzes the condensation of ATP and 5-phosphoribose 1-diphosphate to form N'-(5'-phosphoribosyl)-ATP (PR-ATP). Has a crucial role in the pathway because the rate of histidine biosynthesis seems to be controlled primarily by regulation of HisG enzymatic activity. In Metallosphaera sedula (strain ATCC 51363 / DSM 5348 / JCM 9185 / NBRC 15509 / TH2), this protein is ATP phosphoribosyltransferase.